The primary structure comprises 224 residues: Viral late gene transcription factor 3 (224 aa).

This sequence belongs to the orthopoxvirus VLTF-3/OPG127 family. In terms of assembly, interacts with the late transcription elongation factor VLTF-4/OPG110. Interacts with the late transcription factors VLTF-1/OPG093.

In terms of biological role, acts with RNA polymerase to initiate transcription from late gene promoters. The polypeptide is Viral late gene transcription factor 3 (OPG127) (Monkeypox virus).